The chain runs to 162 residues: Endoribonuclease YbeY (162 aa).

The Zn(2+) site is built by H130, H134, and H140.

The protein belongs to the endoribonuclease YbeY family. The cofactor is Zn(2+).

It is found in the cytoplasm. Single strand-specific metallo-endoribonuclease involved in late-stage 70S ribosome quality control and in maturation of the 3' terminus of the 16S rRNA. This Nitratidesulfovibrio vulgaris (strain ATCC 29579 / DSM 644 / CCUG 34227 / NCIMB 8303 / VKM B-1760 / Hildenborough) (Desulfovibrio vulgaris) protein is Endoribonuclease YbeY.